Consider the following 160-residue polypeptide: UPF0479 membrane protein YLL066W-A (160 aa).

A run of 2 helical transmembrane segments spans residues 39-59 and 136-156; these read IVFC…KVLQ and VPMI…ISQH.

It belongs to the UPF0479 family.

The protein resides in the membrane. This is UPF0479 membrane protein YLL066W-A from Saccharomyces cerevisiae (strain ATCC 204508 / S288c) (Baker's yeast).